The sequence spans 85 residues: Large ribosomal subunit protein bL27 (85 aa).

Belongs to the bacterial ribosomal protein bL27 family.

In Vesicomyosocius okutanii subsp. Calyptogena okutanii (strain HA), this protein is Large ribosomal subunit protein bL27.